Reading from the N-terminus, the 546-residue chain is Interleukin-20 receptor subunit alpha (546 aa).

The first 32 residues, 1–32, serve as a signal peptide directing secretion; the sequence is MHTPGTPAPGHPDPPPLLLLTLLLLLAASGRA. Residues 33–253 are Extracellular-facing; sequence VPCVFCGLPK…EVQTSAWKAK (221 aa). Fibronectin type-III domains are found at residues 42 to 138 and 139 to 245; these read KPTN…FLET and QVSP…TLEV. Asn-45, Asn-86, Asn-94, Asn-185, and Asn-203 each carry an N-linked (GlcNAc...) asparagine glycan. Cysteines 90 and 98 form a disulfide. Residues Cys-218 and Cys-239 are joined by a disulfide bond. Residues 254 to 274 traverse the membrane as a helical segment; sequence VIFWYVFLTSVIVFLFSAIGY. Residues 275-546 are Cytoplasmic-facing; the sequence is LVYRYIHVGK…EWGLHVQMES (272 aa).

Belongs to the type II cytokine receptor family. In terms of assembly, heterodimer with IL20RB and heterodimer with IL10RB.

Its subcellular location is the membrane. In terms of biological role, the IL20RA/IL20RB dimer is a receptor for IL19, IL20 and IL24. The IL20RA/IL10RB dimer is a receptor for IL26. The chain is Interleukin-20 receptor subunit alpha (Il20ra) from Mus musculus (Mouse).